Here is a 133-residue protein sequence, read N- to C-terminus: Putative biopolymer transport protein ExbD-like 1 (133 aa).

Topologically, residues 1–15 are cytoplasmic; the sequence is MNYDNYWDEDKPELN. The chain crosses the membrane as a helical span at residues 16 to 32; that stretch reads ITPLVDVMLVLLAILMV. Over 33–133 the chain is Periplasmic; the sequence is TTPTLTYKEE…FLKVSLITSP (101 aa).

Belongs to the ExbD/TolR family.

It is found in the cell inner membrane. The sequence is that of Putative biopolymer transport protein ExbD-like 1 from Helicobacter pylori (strain J99 / ATCC 700824) (Campylobacter pylori J99).